We begin with the raw amino-acid sequence, 676 residues long: RNA helicase NPH-II (676 aa).

Residues 172–347 (FSAWISHRPV…VFLPNPAFIH (176 aa)) enclose the Helicase ATP-binding domain. 185–192 (GGTGVGKT) serves as a coordination point for ATP. The short motif at 296–299 (DEVH) is the DEXH box element. The 170-residue stretch at 366–535 (NPSSRMAYIE…NYILYANKFN (170 aa)) folds into the Helicase C-terminal domain.

Belongs to the DEAD box helicase family. DEAH subfamily. In terms of assembly, monomer.

Its subcellular location is the virion. It carries out the reaction ATP + H2O = ADP + phosphate + H(+). Its function is as follows. NTP-dependent helicase that catalyzes unidirectional unwinding of 3'tailed duplex RNAs and plays an important role during transcription of early mRNAs, presumably by preventing R-loop formation behind the elongating RNA polymerase. Might also play a role in the export of newly synthesized mRNA chains out of the core into the cytoplasm. Required for replication and propagation of viral particles. In Vaccinia virus (strain Ankara) (VACV), this protein is RNA helicase NPH-II (OPG084).